A 378-amino-acid chain; its full sequence is uncharacterized protein (378 aa).

The protein belongs to the IIV-6 329R family.

This is an uncharacterized protein from Acheta domesticus (House cricket).